The sequence spans 21 residues: Bombinin-H1/H3 (21 aa).

Residue Ile2 is modified to D-allo-isoleucine; in form H3. Ile20 is subject to Isoleucine amide.

This sequence belongs to the bombinin family. As to expression, expressed by the skin glands.

The protein localises to the secreted. Has antimicrobial and hemolytic activities. The sequence is that of Bombinin-H1/H3 from Bombina variegata (Yellow-bellied toad).